We begin with the raw amino-acid sequence, 638 residues long: Chaperone protein DnaK (638 aa).

Thr-199 carries the post-translational modification Phosphothreonine; by autocatalysis. The segment at Glu-600 to Lys-638 is disordered. A compositionally biased stretch (basic and acidic residues) spans Asn-602–Asn-624.

It belongs to the heat shock protein 70 family.

Acts as a chaperone. The sequence is that of Chaperone protein DnaK from Buchnera aphidicola subsp. Schizaphis graminum (strain Sg).